A 101-amino-acid polypeptide reads, in one-letter code: Protein Tat (101 aa).

An interaction with human CREBBP region spans residues 1–24; sequence MEPVDPSLDPWNHPGSQPTTPCTK. The segment at 1–48 is transactivation; it reads MEPVDPSLDPWNHPGSQPTTPCTKCYCKRCCFHCQWCFTTKGLGISYG. Residues Cys22, Cys25, and Cys27 each contribute to the Zn(2+) site. Residues 22–37 are cysteine-rich; sequence CTKCYCKRCCFHCQWC. Lys28 is subject to N6-acetyllysine; by host PCAF. The Zn(2+) site is built by Cys30, His33, Cys34, and Cys37. The core stretch occupies residues 38 to 48; sequence FTTKGLGISYG. Basic residues predominate over residues 48 to 58; the sequence is GRKKRRQRHRT. A disordered region spans residues 48-101; it reads GRKKRRQRHRTPQSSQVHQNSLPKQPLSQARGDPTGPKESKKEVESKAKTDPCA. The short motif at 49–57 is the Nuclear localization signal, RNA-binding (TAR), and protein transduction element; it reads RKKRRQRHR. The interaction with the host capping enzyme RNGTT stretch occupies residues 49–86; it reads RKKRRQRHRTPQSSQVHQNSLPKQPLSQARGDPTGPKE. 2 positions are modified to N6-acetyllysine; by host EP300 and GCN5L2: Lys50 and Lys51. Arg52 and Arg53 each carry asymmetric dimethylarginine; by host PRMT6. Over residues 59–75 the composition is skewed to polar residues; the sequence is PQSSQVHQNSLPKQPLS. Lys71 participates in a covalent cross-link: Glycyl lysine isopeptide (Lys-Gly) (interchain with G-Cter in ubiquitin). Positions 78–80 match the Cell attachment site motif; it reads RGD. Basic and acidic residues predominate over residues 83–101; the sequence is GPKESKKEVESKAKTDPCA.

The protein belongs to the lentiviruses Tat family. In terms of assembly, interacts with host CCNT1. Associates with the P-TEFb complex composed at least of Tat, P-TEFb (CDK9 and CCNT1), TAR RNA, RNA Pol II. Recruits the HATs CREBBP, TAF1/TFIID, EP300, PCAF and GCN5L2. Interacts with host KAT5/Tip60; this interaction targets the latter to degradation. Interacts with the host deacetylase SIRT1. Interacts with host capping enzyme RNGTT; this interaction stimulates RNGTT. Binds to host KDR, and to the host integrins ITGAV/ITGB3 and ITGA5/ITGB1. Interacts with host KPNB1/importin beta-1 without previous binding to KPNA1/importin alpha-1. Interacts with EIF2AK2. Interacts with host nucleosome assembly protein NAP1L1; this interaction may be required for the transport of Tat within the nucleus, since the two proteins interact at the nuclear rim. Interacts with host C1QBP/SF2P32; this interaction involves lysine-acetylated Tat. Interacts with the host chemokine receptors CCR2, CCR3 and CXCR4. Interacts with host DPP4/CD26; this interaction may trigger an anti-proliferative effect. Interacts with host LDLR. Interacts with the host extracellular matrix metalloproteinase MMP1. Interacts with host PRMT6; this interaction mediates Tat's methylation. Interacts with, and is ubiquitinated by MDM2/Hdm2. Interacts with host PSMC3 and HTATIP2. Interacts with STAB1; this interaction may overcome SATB1-mediated repression of IL2 and IL2RA (interleukin) in T cells by binding to the same domain than HDAC1. Interacts (when acetylated) with human CDK13, thereby increasing HIV-1 mRNA splicing and promoting the production of the doubly spliced HIV-1 protein Nef. Interacts with host TBP; this interaction modulates the activity of transcriptional pre-initiation complex. Interacts with host RELA. Interacts with host PLSCR1; this interaction negatively regulates Tat transactivation activity by altering its subcellular distribution. Asymmetrical arginine methylation by host PRMT6 seems to diminish the transactivation capacity of Tat and affects the interaction with host CCNT1. In terms of processing, acetylation by EP300, CREBBP, GCN5L2/GCN5 and PCAF regulates the transactivation activity of Tat. EP300-mediated acetylation of Lys-50 promotes dissociation of Tat from the TAR RNA through the competitive binding to PCAF's bromodomain. In addition, the non-acetylated Tat's N-terminus can also interact with PCAF. PCAF-mediated acetylation of Lys-28 enhances Tat's binding to CCNT1. Lys-50 is deacetylated by SIRT1. Post-translationally, polyubiquitination by host MDM2 does not target Tat to degradation, but activates its transactivation function and fosters interaction with CCNT1 and TAR RNA. Phosphorylated by EIF2AK2 on serine and threonine residues adjacent to the basic region important for TAR RNA binding and function. Phosphorylation of Tat by EIF2AK2 is dependent on the prior activation of EIF2AK2 by dsRNA.

The protein localises to the host nucleus. It is found in the host nucleolus. It localises to the host cytoplasm. The protein resides in the secreted. Its function is as follows. Transcriptional activator that increases RNA Pol II processivity, thereby increasing the level of full-length viral transcripts. Recognizes a hairpin structure at the 5'-LTR of the nascent viral mRNAs referred to as the transactivation responsive RNA element (TAR) and recruits the cyclin T1-CDK9 complex (P-TEFb complex) that will in turn hyperphosphorylate the RNA polymerase II to allow efficient elongation. The CDK9 component of P-TEFb and other Tat-activated kinases hyperphosphorylate the C-terminus of RNA Pol II that becomes stabilized and much more processive. Other factors such as HTATSF1/Tat-SF1, SUPT5H/SPT5, and HTATIP2 are also important for Tat's function. Besides its effect on RNA Pol II processivity, Tat induces chromatin remodeling of proviral genes by recruiting the histone acetyltransferases (HATs) CREBBP, EP300 and PCAF to the chromatin. This also contributes to the increase in proviral transcription rate, especially when the provirus integrates in transcriptionally silent region of the host genome. To ensure maximal activation of the LTR, Tat mediates nuclear translocation of NF-kappa-B by interacting with host RELA. Through its interaction with host TBP, Tat may also modulate transcription initiation. Tat can reactivate a latently infected cell by penetrating in it and transactivating its LTR promoter. In the cytoplasm, Tat is thought to act as a translational activator of HIV-1 mRNAs. Functionally, extracellular circulating Tat can be endocytosed by surrounding uninfected cells via the binding to several surface receptors such as CD26, CXCR4, heparan sulfate proteoglycans (HSPG) or LDLR. Neurons are rarely infected, but they internalize Tat via their LDLR. Through its interaction with nuclear HATs, Tat is potentially able to control the acetylation-dependent cellular gene expression. Modulates the expression of many cellular genes involved in cell survival, proliferation or in coding for cytokines or cytokine receptors. Tat plays a role in T-cell and neurons apoptosis. Tat induced neurotoxicity and apoptosis probably contribute to neuroAIDS. Circulating Tat also acts as a chemokine-like and/or growth factor-like molecule that binds to specific receptors on the surface of the cells, affecting many cellular pathways. In the vascular system, Tat binds to ITGAV/ITGB3 and ITGA5/ITGB1 integrins dimers at the surface of endothelial cells and competes with bFGF for heparin-binding sites, leading to an excess of soluble bFGF. The polypeptide is Protein Tat (Human immunodeficiency virus type 1 group M subtype F1 (isolate VI850) (HIV-1)).